The sequence spans 94 residues: MNAHQIIIRPLITEKNTNLMRFNKYSFEVDRNATKQQIKRAIEEIFSVRVTAVHTMNVRGKLRRRGRQYGYTPDWKKAIVTLAEGDRIDLFEGA.

It belongs to the universal ribosomal protein uL23 family. Part of the 50S ribosomal subunit. Contacts protein L29, and trigger factor when it is bound to the ribosome.

One of the early assembly proteins it binds 23S rRNA. One of the proteins that surrounds the polypeptide exit tunnel on the outside of the ribosome. Forms the main docking site for trigger factor binding to the ribosome. This is Large ribosomal subunit protein uL23 from Roseiflexus castenholzii (strain DSM 13941 / HLO8).